The primary structure comprises 476 residues: Flavin-dependent halogenase otaD (476 aa).

The FAD site is built by Gly-14 and Gly-17. 2 residues coordinate chloride: Ser-304 and Gly-305. Val-306 contacts FAD.

Belongs to the flavin-dependent halogenase family.

The enzyme catalyses ochratoxin B + FADH2 + chloride + O2 = ochratoxin A + FAD + 2 H2O. It functions in the pathway mycotoxin biosynthesis. In terms of biological role, flavin-dependent halogenase; part of the gene cluster that mediates the biosynthesis of ochratoxin A (OTA), a mycotoxin composed of a chlorinated type I polyketide dihydroisocoumarin moiety linked to L-phenylalanine, and demonstrated to have nephrotoxic, immunotoxic, genotoxic, neurotoxic, and teratogenic properties. OtaD chlorinates ochratoxin B (OTB) at the C-5 position to form OTA. The pathway begins with the highly reducing polyketide synthase otaA that catalyzes the formation of the isocoumarin group during the initial stages of biosynthesis, starting from one acetate and 4 malonate units, to originate the characteristic pentaketide skeleton 7-methylmellein (7-MM) of the OTA molecule. The newly identified cyclase otaY might be involved in the polyketide cyclization reaction during the initial steps of the OTA biosynthesis. 7-MM is then oxidized into 7-carboxymellein (also called ochratoxin beta) by the cytochrome P450 monooxygenase otaC. The NRPS encoded by the otaB gene is involved in the linking of phenylalanine to the dihydroisocoumarin ring. The reaction catalyzed by NRPS results in the production of ochratoxin B (OTB), which is the non-chlorinated analog of OTA and which subsequently serves as the substrate of the halogenase otaD for chlorination activity to form the final molecular structure of OTA, containing a chlorine atom in the C-5 position of the molecule. The chain is Flavin-dependent halogenase otaD from Aspergillus niger (strain ATCC MYA-4892 / CBS 513.88 / FGSC A1513).